Consider the following 765-residue polypeptide: 1,4-alpha-glucan branching enzyme GlgB (765 aa).

D431 acts as the Nucleophile in catalysis. Catalysis depends on E484, which acts as the Proton donor.

This sequence belongs to the glycosyl hydrolase 13 family. GlgB subfamily. As to quaternary structure, monomer.

The catalysed reaction is Transfers a segment of a (1-&gt;4)-alpha-D-glucan chain to a primary hydroxy group in a similar glucan chain.. It functions in the pathway glycan biosynthesis; glycogen biosynthesis. In terms of biological role, catalyzes the formation of the alpha-1,6-glucosidic linkages in glycogen by scission of a 1,4-alpha-linked oligosaccharide from growing alpha-1,4-glucan chains and the subsequent attachment of the oligosaccharide to the alpha-1,6 position. The polypeptide is 1,4-alpha-glucan branching enzyme GlgB (Synechococcus sp. (strain CC9311)).